Consider the following 432-residue polypeptide: Adenylosuccinate synthetase (432 aa).

GTP contacts are provided by residues 12-18 and 40-42; these read GDEGKGK and GHT. The Proton acceptor role is filled by D13. Positions 13 and 40 each coordinate Mg(2+). IMP contacts are provided by residues 13–16, 38–41, T132, R146, Q226, T241, and R305; these read DEGK and NAGH. The active-site Proton donor is H41. A substrate-binding site is contributed by 301-307; that stretch reads VVTGRKR. Residues R307, 333-335, and 415-417 contribute to the GTP site; these read KLD and STS.

This sequence belongs to the adenylosuccinate synthetase family. Homodimer. Mg(2+) serves as cofactor.

It is found in the cytoplasm. The enzyme catalyses IMP + L-aspartate + GTP = N(6)-(1,2-dicarboxyethyl)-AMP + GDP + phosphate + 2 H(+). Its pathway is purine metabolism; AMP biosynthesis via de novo pathway; AMP from IMP: step 1/2. Functionally, plays an important role in the de novo pathway of purine nucleotide biosynthesis. Catalyzes the first committed step in the biosynthesis of AMP from IMP. This is Adenylosuccinate synthetase from Rhizobium johnstonii (strain DSM 114642 / LMG 32736 / 3841) (Rhizobium leguminosarum bv. viciae).